Reading from the N-terminus, the 93-residue chain is Large ribosomal subunit protein bL31B (93 aa).

The protein belongs to the bacterial ribosomal protein bL31 family. Type B subfamily. As to quaternary structure, part of the 50S ribosomal subunit.

The polypeptide is Large ribosomal subunit protein bL31B (Pseudomonas syringae pv. tomato (strain ATCC BAA-871 / DC3000)).